We begin with the raw amino-acid sequence, 128 residues long: Large ribosomal subunit protein bL12 (128 aa).

Belongs to the bacterial ribosomal protein bL12 family. Homodimer. Part of the ribosomal stalk of the 50S ribosomal subunit. Forms a multimeric L10(L12)X complex, where L10 forms an elongated spine to which 2 to 4 L12 dimers bind in a sequential fashion. Binds GTP-bound translation factors.

Its function is as follows. Forms part of the ribosomal stalk which helps the ribosome interact with GTP-bound translation factors. Is thus essential for accurate translation. The protein is Large ribosomal subunit protein bL12 of Brachyspira hyodysenteriae (strain ATCC 49526 / WA1).